Here is a 105-residue protein sequence, read N- to C-terminus: UPF0145 protein OEOE_0637 (105 aa).

It belongs to the UPF0145 family.

In Oenococcus oeni (strain ATCC BAA-331 / PSU-1), this protein is UPF0145 protein OEOE_0637.